A 262-amino-acid chain; its full sequence is MKLLEKMTYVECFMIIMATWFMFISYSHGANVAAAPGTNGLDTAWYDARAAYYGDIHGGGTELEGACGYGDLNKHGYGLATAALSTALFNSGASCGACYEIMCSPNPQGCLSGSIKITATDLCPPGSAWCYLPNKHFDLSLPMFIKIAQVKAKMVPVRYRRVPCAKTGGVKFEVKGNPNILTILPYNVGGAGDIIAVSAKGSKTAWVVMSRYWGQNWTTNVNLTGQSVSLRVTTSDGITKDFTDVMPASWGFGQTFDGKTNF.

The N-terminal stretch at 1–29 (MKLLEKMTYVECFMIIMATWFMFISYSHG) is a signal peptide. Residues 64 to 169 (EGACGYGDLN…RRVPCAKTGG (106 aa)) form the Expansin-like EG45 domain. The region spanning 179 to 258 (NILTILPYNV…SWGFGQTFDG (80 aa)) is the Expansin-like CBD domain.

This sequence belongs to the expansin family. Expansin A subfamily.

It localises to the secreted. The protein localises to the cell wall. Its subcellular location is the membrane. In terms of biological role, causes loosening and extension of plant cell walls by disrupting non-covalent bonding between cellulose microfibrils and matrix glucans. No enzymatic activity has been found. The sequence is that of Expansin-A21 (EXPA21) from Arabidopsis thaliana (Mouse-ear cress).